A 358-amino-acid chain; its full sequence is DNA integrity scanning protein DisA (358 aa).

The region spanning 6 to 144 (RPTLREAVAR…RGERHVLTDS (139 aa)) is the DAC domain. Residues G73, L91, and 104–108 (TRHRS) contribute to the ATP site.

It belongs to the DisA family. In terms of assembly, homooctamer. Mg(2+) serves as cofactor.

The catalysed reaction is 2 ATP = 3',3'-c-di-AMP + 2 diphosphate. Functionally, participates in a DNA-damage check-point. DisA forms globular foci that rapidly scan along the chromosomes searching for lesions. In terms of biological role, also has diadenylate cyclase activity, catalyzing the condensation of 2 ATP molecules into cyclic di-AMP (c-di-AMP). c-di-AMP likely acts as a signaling molecule that may couple DNA integrity with a cellular process. The sequence is that of DNA integrity scanning protein DisA from Mycobacterium tuberculosis (strain ATCC 25177 / H37Ra).